The chain runs to 204 residues: Imidazole glycerol phosphate synthase subunit HisH (204 aa).

A Glutamine amidotransferase type-1 domain is found at 1-204; sequence MIKIVDYGLG…MTLLKNFSEI (204 aa). The Nucleophile role is filled by cysteine 80. Active-site residues include histidine 186 and glutamate 188.

Heterodimer of HisH and HisF.

Its subcellular location is the cytoplasm. It catalyses the reaction 5-[(5-phospho-1-deoxy-D-ribulos-1-ylimino)methylamino]-1-(5-phospho-beta-D-ribosyl)imidazole-4-carboxamide + L-glutamine = D-erythro-1-(imidazol-4-yl)glycerol 3-phosphate + 5-amino-1-(5-phospho-beta-D-ribosyl)imidazole-4-carboxamide + L-glutamate + H(+). The enzyme catalyses L-glutamine + H2O = L-glutamate + NH4(+). Its pathway is amino-acid biosynthesis; L-histidine biosynthesis; L-histidine from 5-phospho-alpha-D-ribose 1-diphosphate: step 5/9. Its function is as follows. IGPS catalyzes the conversion of PRFAR and glutamine to IGP, AICAR and glutamate. The HisH subunit catalyzes the hydrolysis of glutamine to glutamate and ammonia as part of the synthesis of IGP and AICAR. The resulting ammonia molecule is channeled to the active site of HisF. This is Imidazole glycerol phosphate synthase subunit HisH from Bdellovibrio bacteriovorus (strain ATCC 15356 / DSM 50701 / NCIMB 9529 / HD100).